The chain runs to 427 residues: 3-phosphoshikimate 1-carboxyvinyltransferase (427 aa).

3-phosphoshikimate is bound by residues Lys-22, Ser-23, and Arg-27. A phosphoenolpyruvate-binding site is contributed by Lys-22. Positions 93 and 122 each coordinate phosphoenolpyruvate. 4 residues coordinate 3-phosphoshikimate: Ser-167, Gln-169, Asp-315, and Lys-342. Phosphoenolpyruvate is bound at residue Gln-169. Residue Asp-315 is the Proton acceptor of the active site. Phosphoenolpyruvate-binding residues include Arg-346 and Arg-387.

Belongs to the EPSP synthase family. Monomer.

The protein localises to the cytoplasm. It carries out the reaction 3-phosphoshikimate + phosphoenolpyruvate = 5-O-(1-carboxyvinyl)-3-phosphoshikimate + phosphate. Its pathway is metabolic intermediate biosynthesis; chorismate biosynthesis; chorismate from D-erythrose 4-phosphate and phosphoenolpyruvate: step 6/7. Functionally, catalyzes the transfer of the enolpyruvyl moiety of phosphoenolpyruvate (PEP) to the 5-hydroxyl of shikimate-3-phosphate (S3P) to produce enolpyruvyl shikimate-3-phosphate and inorganic phosphate. This is 3-phosphoshikimate 1-carboxyvinyltransferase from Thermus thermophilus (strain ATCC 27634 / DSM 579 / HB8).